Reading from the N-terminus, the 389-residue chain is Histidinol-phosphate aminotransferase (389 aa).

Position 233 is an N6-(pyridoxal phosphate)lysine (Lys-233).

It belongs to the class-II pyridoxal-phosphate-dependent aminotransferase family. The cofactor is pyridoxal 5'-phosphate.

It catalyses the reaction L-histidinol phosphate + 2-oxoglutarate = 3-(imidazol-4-yl)-2-oxopropyl phosphate + L-glutamate. The protein operates within amino-acid biosynthesis; L-histidine biosynthesis; L-histidine from 5-phospho-alpha-D-ribose 1-diphosphate: step 7/9. This is Histidinol-phosphate aminotransferase (HIS5) from Candida maltosa (Yeast).